The chain runs to 877 residues: Alanine--tRNA ligase (877 aa).

Residues His-561, His-565, Cys-669, and His-673 each contribute to the Zn(2+) site.

It belongs to the class-II aminoacyl-tRNA synthetase family. Zn(2+) serves as cofactor.

The protein resides in the cytoplasm. The catalysed reaction is tRNA(Ala) + L-alanine + ATP = L-alanyl-tRNA(Ala) + AMP + diphosphate. Catalyzes the attachment of alanine to tRNA(Ala) in a two-step reaction: alanine is first activated by ATP to form Ala-AMP and then transferred to the acceptor end of tRNA(Ala). Also edits incorrectly charged Ser-tRNA(Ala) and Gly-tRNA(Ala) via its editing domain. The chain is Alanine--tRNA ligase from Endomicrobium trichonymphae.